The sequence spans 375 residues: Chaperone protein DnaJ (375 aa).

The 65-residue stretch at 4–68 (DYYETLGVDR…ETRARYDQFG (65 aa)) folds into the J domain. The segment at 134 to 216 (GGEKEIRIPH…CGGAGRKQET (83 aa)) adopts a CR-type zinc-finger fold. The Zn(2+) site is built by Cys147, Cys150, Cys164, Cys167, Cys190, Cys193, Cys204, and Cys207. CXXCXGXG motif repeat units lie at residues 147-154 (CQVCNGSG), 164-171 (CSTCNGAG), 190-197 (CPDCNGAG), and 204-211 (CDACGGAG).

This sequence belongs to the DnaJ family. Homodimer. The cofactor is Zn(2+).

The protein localises to the cytoplasm. Functionally, participates actively in the response to hyperosmotic and heat shock by preventing the aggregation of stress-denatured proteins and by disaggregating proteins, also in an autonomous, DnaK-independent fashion. Unfolded proteins bind initially to DnaJ; upon interaction with the DnaJ-bound protein, DnaK hydrolyzes its bound ATP, resulting in the formation of a stable complex. GrpE releases ADP from DnaK; ATP binding to DnaK triggers the release of the substrate protein, thus completing the reaction cycle. Several rounds of ATP-dependent interactions between DnaJ, DnaK and GrpE are required for fully efficient folding. Also involved, together with DnaK and GrpE, in the DNA replication of plasmids through activation of initiation proteins. The protein is Chaperone protein DnaJ of Rippkaea orientalis (strain PCC 8801 / RF-1) (Cyanothece sp. (strain PCC 8801)).